The chain runs to 368 residues: Endophilin-A2 (368 aa).

A membrane-binding amphipathic helix region spans residues 1–21 (MSVAGLKKQFYKASQLVSEKV). One can recognise a BAR domain in the interval 18-249 (SEKVGGAEGT…LKRRVREASS (232 aa)). Residues 60–87 (PNPASRAKLTMLNTVSKIRGQVKNPGYP) are required for dimerization upon membrane association. Positions 180 to 250 (DEELRQALEK…KRRVREASSR (71 aa)) form a coiled coil. The interval 218–254 (LVDAQLDYHRQAVQILEELADKLKRRVREASSRPKRE) is interaction with ARC. The disordered stretch occupies residues 244–307 (VREASSRPKR…MPSKSMPPLD (64 aa)). A compositionally biased stretch (basic and acidic residues) spans 245–263 (REASSRPKREFKPRPREPF). Ser288 and Ser292 each carry phosphoserine. One can recognise an SH3 domain in the interval 306 to 365 (LDQPSCKALYDFEPENDGELGFREGDLITLTNQIDENWYEGMLHGQSGFFPLSYVQVLVP). Tyr315 is subject to Phosphotyrosine.

The protein belongs to the endophilin family. Interacts with ARC, SYNJ1 and DNM1. Interacts with PDCD6IP. Interacts with BIN2.

It is found in the cytoplasm. Its subcellular location is the early endosome membrane. The protein resides in the cell projection. It localises to the podosome. In terms of biological role, implicated in endocytosis. May recruit other proteins to membranes with high curvature. The chain is Endophilin-A2 (Sh3gl1) from Mus musculus (Mouse).